Reading from the N-terminus, the 104-residue chain is NADH-quinone oxidoreductase subunit K (104 aa).

The next 3 membrane-spanning stretches (helical) occupy residues 4-24, 28-48, and 64-84; these read VAYYLVLSAILFSIGVGAFLI, IITIFMSIELMLNAVNLSFVA, and IFVFFVMVVAAAEAAVGLAII.

Belongs to the complex I subunit 4L family. In terms of assembly, NDH-1 is composed of 14 different subunits. Subunits NuoA, H, J, K, L, M, N constitute the membrane sector of the complex.

It is found in the cell inner membrane. It carries out the reaction a quinone + NADH + 5 H(+)(in) = a quinol + NAD(+) + 4 H(+)(out). Functionally, NDH-1 shuttles electrons from NADH, via FMN and iron-sulfur (Fe-S) centers, to quinones in the respiratory chain. The immediate electron acceptor for the enzyme in this species is believed to be ubiquinone. Couples the redox reaction to proton translocation (for every two electrons transferred, four hydrogen ions are translocated across the cytoplasmic membrane), and thus conserves the redox energy in a proton gradient. This Acidobacterium capsulatum (strain ATCC 51196 / DSM 11244 / BCRC 80197 / JCM 7670 / NBRC 15755 / NCIMB 13165 / 161) protein is NADH-quinone oxidoreductase subunit K.